The following is a 177-amino-acid chain: Large ribosomal subunit protein uL6 (177 aa).

The protein belongs to the universal ribosomal protein uL6 family. Part of the 50S ribosomal subunit.

In terms of biological role, this protein binds to the 23S rRNA, and is important in its secondary structure. It is located near the subunit interface in the base of the L7/L12 stalk, and near the tRNA binding site of the peptidyltransferase center. In Colwellia psychrerythraea (strain 34H / ATCC BAA-681) (Vibrio psychroerythus), this protein is Large ribosomal subunit protein uL6.